The following is a 139-amino-acid chain: D-ribose pyranase (139 aa).

The active-site Proton donor is the H20. Substrate contacts are provided by residues D28, H106, and 128 to 130; that span reads YAN.

Belongs to the RbsD / FucU family. RbsD subfamily. In terms of assembly, homodecamer.

The protein localises to the cytoplasm. The catalysed reaction is beta-D-ribopyranose = beta-D-ribofuranose. It functions in the pathway carbohydrate metabolism; D-ribose degradation; D-ribose 5-phosphate from beta-D-ribopyranose: step 1/2. In terms of biological role, catalyzes the interconversion of beta-pyran and beta-furan forms of D-ribose. This is D-ribose pyranase from Aliivibrio salmonicida (strain LFI1238) (Vibrio salmonicida (strain LFI1238)).